A 387-amino-acid chain; its full sequence is MSTATTTVTTSDQASHPTKIYCSGLQCGRETSSQMKCPVCLKQGIVSIFCDTSCYENNYKAHKALHNAKDGLEGAYDPFPKFKYSGKVKASYPLTPRRYVPEDIPKPDWAANGLPVSEQRNDRLNNIPIYKKDQIKKIRKACMLGREVLDIAAAHVRPGITTDELDEIVHNETIKRGAYPSPLNYYNFPKSLCTSVNEVICHGVPDKTVLKEGDIVNLDVSLYYQGYHADLNETYYVGENISKEALNTTETSRECLKLAIKMCKPGTTFQELGDHIEKHATENKCSVVRTYCGHGVGEFFHCSPNIPHYAKNRTPGVMKPGMVFTIEPMINEGTWKDMTWPDDWTSTTQDGKLSAQFEHTLLVTEHGVEILTARNKKSPGGPRQRIK.

S2 carries the N-acetylserine modification. Positions 2-10 (STATTTVTT) are excised as a propeptide. Residues 19–73 (KIYCSGLQCGRETSSQMKCPVCLKQGIVSIFCDTSCYENNYKAHKALHNAKDGLE) form a C6H2-type zinc finger. Residues C22, C27, C37, C40, C50, C54, H62, and H66 each coordinate Zn(2+). Residue H202 coordinates a protein. The Zn(2+) site is built by D219, D230, and H294. H301 lines the a protein pocket. Zn(2+)-binding residues include E327 and E358.

It belongs to the peptidase M24A family. Methionine aminopeptidase type 1 subfamily. In terms of assembly, associates with the 60S ribosomal subunit of the 80S translational complex. Requires Zn(2+) as cofactor. It depends on Co(2+) as a cofactor. The cofactor is Mn(2+). Fe(2+) serves as cofactor.

Its subcellular location is the cytoplasm. The catalysed reaction is Release of N-terminal amino acids, preferentially methionine, from peptides and arylamides.. In contract to the MetAP 2 isoform, is not inhibited by the fungal metabolite fumagillin, an antiangiogenic drug. Cotranslationally removes the N-terminal methionine from nascent proteins. The N-terminal methionine is often cleaved when the second residue in the primary sequence is small and uncharged (Met-Ala-, Cys, Gly, Pro, Ser, Thr, or Val). Plays the major role in N-terminal methionine removal. Less efficient when the second residue is Val. The sequence is that of Methionine aminopeptidase 1 (MAP1) from Saccharomyces cerevisiae (strain ATCC 204508 / S288c) (Baker's yeast).